Reading from the N-terminus, the 562-residue chain is Apyrase (562 aa).

The signal sequence occupies residues 1-24; that stretch reads MAGRPGYSEVIFLYVVSVAVIARA. Asp-47, His-49, and Asp-98 together coordinate a divalent metal cation. Residue Asn-112 is glycosylated (N-linked (GlcNAc...) asparagine). Residues Asn-130, His-233, and His-257 each contribute to the a divalent metal cation site. Position 370 (Arg-370) interacts with AMP. Asn-390 carries an N-linked (GlcNAc...) asparagine glycan. Arg-405, Phe-424, and Asp-514 together coordinate AMP.

Belongs to the 5'-nucleotidase family. (Microbial infection) Interacts with Zika virus envelope protein E and Zika virus-like particles; the interaction does not affect Zika virus replication in human endothelial cells and keratinocytes. The cofactor is a divalent metal cation. The N-terminus is blocked. In terms of tissue distribution, female saliva (at protein level). Female salivary gland (at protein level). Not detected or low-level expression in female carcasses without salivary glands. Not detected in male tissues.

The protein localises to the secreted. It catalyses the reaction a ribonucleoside 5'-triphosphate + 2 H2O = a ribonucleoside 5'-phosphate + 2 phosphate + 2 H(+). Facilitates hematophagy by preventing ADP-, collagen- and thrombin-dependent platelet aggregation in the host. Cleaves adenosine triphosphate (ATP) and adenosine diphosphate (ADP) to adenosine monophosphate (AMP) and inorganic phosphate. May reduce probing time by facilitating the speed of locating blood. In terms of biological role, (Microbial infection) Does not affect Zika virus replication in human endothelial cells and keratinocytes. The polypeptide is Apyrase (Aedes aegypti (Yellowfever mosquito)).